Reading from the N-terminus, the 240-residue chain is Pyridoxine 5'-phosphate synthase (240 aa).

N7 contacts 3-amino-2-oxopropyl phosphate. Position 9 to 10 (9 to 10) interacts with 1-deoxy-D-xylulose 5-phosphate; that stretch reads DH. R18 contributes to the 3-amino-2-oxopropyl phosphate binding site. H43 serves as the catalytic Proton acceptor. 1-deoxy-D-xylulose 5-phosphate-binding residues include R45 and H50. E70 functions as the Proton acceptor in the catalytic mechanism. Position 100 (T100) interacts with 1-deoxy-D-xylulose 5-phosphate. Residue H191 is the Proton donor of the active site. Residues G192 and 213 to 214 each bind 3-amino-2-oxopropyl phosphate; that span reads GH.

The protein belongs to the PNP synthase family. As to quaternary structure, homooctamer; tetramer of dimers.

It is found in the cytoplasm. The enzyme catalyses 3-amino-2-oxopropyl phosphate + 1-deoxy-D-xylulose 5-phosphate = pyridoxine 5'-phosphate + phosphate + 2 H2O + H(+). It participates in cofactor biosynthesis; pyridoxine 5'-phosphate biosynthesis; pyridoxine 5'-phosphate from D-erythrose 4-phosphate: step 5/5. Catalyzes the complicated ring closure reaction between the two acyclic compounds 1-deoxy-D-xylulose-5-phosphate (DXP) and 3-amino-2-oxopropyl phosphate (1-amino-acetone-3-phosphate or AAP) to form pyridoxine 5'-phosphate (PNP) and inorganic phosphate. The sequence is that of Pyridoxine 5'-phosphate synthase from Gloeothece citriformis (strain PCC 7424) (Cyanothece sp. (strain PCC 7424)).